A 96-amino-acid chain; its full sequence is Putative septation protein SpoVG (96 aa).

Belongs to the SpoVG family.

Could be involved in septation. This is Putative septation protein SpoVG from Geobacillus sp. (strain WCH70).